Consider the following 278-residue polypeptide: S-formylglutathione hydrolase YeiG (278 aa).

Residues Ser-145, Asp-223, and His-256 each act as charge relay system in the active site.

The protein belongs to the esterase D family.

It catalyses the reaction S-formylglutathione + H2O = formate + glutathione + H(+). In terms of biological role, serine hydrolase involved in the detoxification of formaldehyde. Hydrolyzes S-formylglutathione to glutathione and formate. The chain is S-formylglutathione hydrolase YeiG (yeiG) from Shigella flexneri serotype 5b (strain 8401).